Consider the following 529-residue polypeptide: Bifunctional purine biosynthesis protein PurH (529 aa).

The region spanning 2 to 149 (TDLHPVRRAL…KNHAFVNVVV (148 aa)) is the MGS-like domain.

This sequence belongs to the PurH family.

The catalysed reaction is (6R)-10-formyltetrahydrofolate + 5-amino-1-(5-phospho-beta-D-ribosyl)imidazole-4-carboxamide = 5-formamido-1-(5-phospho-D-ribosyl)imidazole-4-carboxamide + (6S)-5,6,7,8-tetrahydrofolate. The enzyme catalyses IMP + H2O = 5-formamido-1-(5-phospho-D-ribosyl)imidazole-4-carboxamide. It participates in purine metabolism; IMP biosynthesis via de novo pathway; 5-formamido-1-(5-phospho-D-ribosyl)imidazole-4-carboxamide from 5-amino-1-(5-phospho-D-ribosyl)imidazole-4-carboxamide (10-formyl THF route): step 1/1. It functions in the pathway purine metabolism; IMP biosynthesis via de novo pathway; IMP from 5-formamido-1-(5-phospho-D-ribosyl)imidazole-4-carboxamide: step 1/1. This chain is Bifunctional purine biosynthesis protein PurH, found in Ruegeria sp. (strain TM1040) (Silicibacter sp.).